The primary structure comprises 1377 residues: DNA-directed RNA polymerase subunit beta' (1377 aa).

Positions 60, 62, 75, and 78 each coordinate Zn(2+). Mg(2+)-binding residues include Asp449, Asp451, and Asp453. Zn(2+) is bound by residues Cys777, Cys851, Cys858, and Cys861.

The protein belongs to the RNA polymerase beta' chain family. The RNAP catalytic core consists of 2 alpha, 1 beta, 1 beta' and 1 omega subunit. When a sigma factor is associated with the core the holoenzyme is formed, which can initiate transcription. Requires Mg(2+) as cofactor. Zn(2+) is required as a cofactor.

The catalysed reaction is RNA(n) + a ribonucleoside 5'-triphosphate = RNA(n+1) + diphosphate. In terms of biological role, DNA-dependent RNA polymerase catalyzes the transcription of DNA into RNA using the four ribonucleoside triphosphates as substrates. The protein is DNA-directed RNA polymerase subunit beta' of Borreliella burgdorferi (strain ZS7) (Borrelia burgdorferi).